A 142-amino-acid chain; its full sequence is Large ribosomal subunit protein uL13 (142 aa).

The protein belongs to the universal ribosomal protein uL13 family. As to quaternary structure, part of the 50S ribosomal subunit.

This protein is one of the early assembly proteins of the 50S ribosomal subunit, although it is not seen to bind rRNA by itself. It is important during the early stages of 50S assembly. In Psychrobacter arcticus (strain DSM 17307 / VKM B-2377 / 273-4), this protein is Large ribosomal subunit protein uL13.